The chain runs to 62 residues: Large ribosomal subunit protein eL37 (62 aa).

Cys20, Cys23, Cys35, and Cys38 together coordinate Zn(2+). Residues 20-38 (CRRCGRVSYNVKKGYCAAC) form a C4-type zinc finger.

It belongs to the eukaryotic ribosomal protein eL37 family. In terms of assembly, part of the 50S ribosomal subunit. Zn(2+) is required as a cofactor.

Its function is as follows. Binds to the 23S rRNA. The protein is Large ribosomal subunit protein eL37 of Pyrococcus furiosus (strain ATCC 43587 / DSM 3638 / JCM 8422 / Vc1).